Consider the following 685-residue polypeptide: Augmin complex subunit dgt5 (685 aa).

Coiled-coil stretches lie at residues 87-165 (LQRY…NKIQ) and 342-379 (NMRN…DLKL).

Component of the augmin complex composed of dgt2, dgt3, dgt4, dgt5, dgt6, msd1, msd5 and wac. The complex interacts directly or indirectly with microtubules and is required for centrosome-independent generation of spindle microtubules.

The protein resides in the cytoplasm. It is found in the cytoskeleton. The protein localises to the spindle. It localises to the chromosome. Its subcellular location is the centromere. The protein resides in the kinetochore. It is found in the microtubule organizing center. The protein localises to the centrosome. As part of the augmin complex, plays a role in centrosome-independent generation of spindle microtubules. The complex is required for mitotic spindle assembly through its involvement in localizing gamma-tubulin to spindle microtubules. This is Augmin complex subunit dgt5 from Drosophila melanogaster (Fruit fly).